The following is a 682-amino-acid chain: Methionine--tRNA ligase (682 aa).

Residues 14–24 (PYANGSIHLGH) carry the 'HIGH' region motif. The Zn(2+) site is built by Cys-145, Cys-148, Cys-158, and Cys-161. The 'KMSKS' region motif lies at 331–335 (KMSKS). An ATP-binding site is contributed by Lys-334. The tRNA-binding domain occupies 580–682 (AFAAIDLRVA…SGARPGQRIK (103 aa)).

It belongs to the class-I aminoacyl-tRNA synthetase family. MetG type 1 subfamily. In terms of assembly, homodimer. The cofactor is Zn(2+).

It is found in the cytoplasm. It catalyses the reaction tRNA(Met) + L-methionine + ATP = L-methionyl-tRNA(Met) + AMP + diphosphate. Functionally, is required not only for elongation of protein synthesis but also for the initiation of all mRNA translation through initiator tRNA(fMet) aminoacylation. The polypeptide is Methionine--tRNA ligase (Pseudomonas syringae pv. syringae (strain B728a)).